We begin with the raw amino-acid sequence, 78 residues long: Large ribosomal subunit protein bL28 (78 aa).

A disordered region spans residues 1–24 (MSKVCQVTGKRPASGNNVSHAHNK).

This sequence belongs to the bacterial ribosomal protein bL28 family.

The protein is Large ribosomal subunit protein bL28 of Nitrosococcus oceani (strain ATCC 19707 / BCRC 17464 / JCM 30415 / NCIMB 11848 / C-107).